Here is a 210-residue protein sequence, read N- to C-terminus: Cancer/testis antigen 2 (210 aa).

Composition is skewed to gly residues over residues 1 to 47 (MQAE…GPRG) and 56 to 66 (PRGGAPRGPHG). Disordered stretches follow at residues 1–80 (MQAE…PCGA) and 154–197 (GLGS…DGCR). A compositionally biased stretch (basic and acidic residues) spans 163–177 (QKARDLRTPKHKVSE).

Belongs to the CTAG/PCC1 family. Testis and very low level in placenta and in some uterus samples. Observed in 25-50% of tumor samples of melanomas, non-small-cell lung carcinomas, bladder, prostate and head and neck cancers.

This chain is Cancer/testis antigen 2 (CTAG2), found in Homo sapiens (Human).